Reading from the N-terminus, the 426-residue chain is Synaptotagmin-13 (426 aa).

Residues 1-6 are Vesicular-facing; that stretch reads MVLSVP. A helical membrane pass occupies residues 7-29; that stretch reads VIALGATLGTATSILALCGVTCL. At 30-426 the chain is on the cytoplasmic side; that stretch reads CRHMHPKKGL…QIAMWHQLHL (397 aa). C2 domains are found at residues 158–275 and 287–422; these read QAPK…AQWG and GAGE…AMWH.

This sequence belongs to the synaptotagmin family. In terms of assembly, interacts with NRXN1. Expressed in brain, pancreas and kidney.

The protein localises to the membrane. Functionally, may be involved in transport vesicle docking to the plasma membrane. The chain is Synaptotagmin-13 (SYT13) from Homo sapiens (Human).